The primary structure comprises 231 residues: Probable septum site-determining protein MinC (231 aa).

Residues 101–125 (GKEKAPRPAPTPQAPAQNTTPVTKT) form a disordered region. A compositionally biased stretch (low complexity) spans 114 to 123 (APAQNTTPVT).

It belongs to the MinC family. As to quaternary structure, interacts with MinD and FtsZ.

In terms of biological role, cell division inhibitor that blocks the formation of polar Z ring septums. Rapidly oscillates between the poles of the cell to destabilize FtsZ filaments that have formed before they mature into polar Z rings. Prevents FtsZ polymerization. The protein is Probable septum site-determining protein MinC of Escherichia coli (strain ATCC 8739 / DSM 1576 / NBRC 3972 / NCIMB 8545 / WDCM 00012 / Crooks).